The following is a 308-amino-acid chain: MKHYEVEILDAKTREKLCFLDKVEPHATIAEIKNLFTKTHPQWYPARQSLRLDPKGKSLKDEDVLQKLPVGTTATLYFRDLGAQISWVTVFLTEYAGPLFIYLLFYFRVPFIYGHKYDFTSSRHTVVHLACICHSFHYIKRLLETLFVHRFSHGTMPLRNIFKNCTYYWGFAAWMAYYINHPLYTPPTYGAQQVKLALAIFVICQLGNFSIHMALRDLRPAGSKTRKIPYPTKNPFTWLFLLVSCPNYTYEVGSWIGFAIMTQCLPVALFSLVGFTQMTIWAKGKHRSYLKEFRDYPPLRMPIIPFLL.

Residues 1–86 (MKHYEVEILD…YFRDLGAQIS (86 aa)) lie on the Cytoplasmic side of the membrane. At K22 the chain carries N6-acetyllysine. Phosphoserine is present on S58. Residue K60 is modified to N6-acetyllysine. A helical transmembrane segment spans residues 87-106 (WVTVFLTEYAGPLFIYLLFY). The Lumenal portion of the chain corresponds to 107–124 (FRVPFIYGHKYDFTSSRH). The helical transmembrane segment at 125-147 (TVVHLACICHSFHYIKRLLETLF) threads the bilayer. At 148 to 158 (VHRFSHGTMPL) the chain is on the cytoplasmic side. The chain crosses the membrane as a helical span at residues 159-180 (RNIFKNCTYYWGFAAWMAYYIN). Residues 181–189 (HPLYTPPTY) are Lumenal-facing. A helical membrane pass occupies residues 190 to 216 (GAQQVKLALAIFVICQLGNFSIHMALR). The Cytoplasmic segment spans residues 217–245 (DLRPAGSKTRKIPYPTKNPFTWLFLLVSC). The chain crosses the membrane as a helical span at residues 246–262 (PNYTYEVGSWIGFAIMT). The Lumenal portion of the chain corresponds to 263-264 (QC). Residues 265 to 292 (LPVALFSLVGFTQMTIWAKGKHRSYLKE) form a helical membrane-spanning segment. The Cytoplasmic segment spans residues 293-308 (FRDYPPLRMPIIPFLL).

Belongs to the steroid 5-alpha reductase family. In terms of assembly, interacts with ELOVL1 and LASS2. Interacts with HACD1 and HACD2 (via the third lumenal loop), but not with HACD3 and HACD4. Interacts with ELOVL1, ELOVL2, ELOVL3, ELOVL5 and ELOVL7 in the presence of acyl-CoA; interaction with HACD1/2 and that with ELOVLs are mutually exclusive. In terms of processing, glycosylated. In terms of tissue distribution, expressed in most tissues tested. Highly expressed in skeletal muscle.

Its subcellular location is the endoplasmic reticulum membrane. It carries out the reaction a very-long-chain 2,3-saturated fatty acyl-CoA + NADP(+) = a very-long-chain (2E)-enoyl-CoA + NADPH + H(+). The enzyme catalyses octadecanoyl-CoA + NADP(+) = (2E)-octadecenoyl-CoA + NADPH + H(+). It catalyses the reaction (2E,7Z,10Z,13Z,16Z)-docosapentaenoyl-CoA + NADPH + H(+) = (7Z,10Z,13Z,16Z)-docosatetraenoyl-CoA + NADP(+). The catalysed reaction is (2E,7Z,10Z,13Z,16Z,19Z)-docosahexaenoyl-CoA + NADPH + H(+) = (7Z,10Z,13Z,16Z,19Z)-docosapentaenoyl-CoA + NADP(+). It carries out the reaction (2E,8Z,11Z,14Z)-eicosatetraenoyl-CoA + NADPH + H(+) = (8Z,11Z,14Z)-eicosatrienoyl-CoA + NADP(+). The enzyme catalyses (2E)-hexadecenoyl-CoA + NADPH + H(+) = hexadecanoyl-CoA + NADP(+). It functions in the pathway lipid metabolism; fatty acid biosynthesis. It participates in lipid metabolism; sphingolipid metabolism. Involved in both the production of very long-chain fatty acids for sphingolipid synthesis and the degradation of the sphingosine moiety in sphingolipids through the sphingosine 1-phosphate metabolic pathway. Catalyzes the last of the four reactions of the long-chain fatty acids elongation cycle. This endoplasmic reticulum-bound enzymatic process, allows the addition of 2 carbons to the chain of long- and very long-chain fatty acids/VLCFAs per cycle. This enzyme reduces the trans-2,3-enoyl-CoA fatty acid intermediate to an acyl-CoA that can be further elongated by entering a new cycle of elongation. Thereby, it participates in the production of VLCFAs of different chain lengths that are involved in multiple biological processes as precursors of membrane lipids and lipid mediators. Catalyzes the saturation step of the sphingosine 1-phosphate metabolic pathway, the conversion of trans-2-hexadecenoyl-CoA to palmitoyl-CoA. The polypeptide is Very-long-chain enoyl-CoA reductase (TECR) (Homo sapiens (Human)).